The primary structure comprises 289 residues: Caffeoylpyruvate hydrolase (289 aa).

Glu140, Glu142, and Asp171 together coordinate a divalent metal cation.

Belongs to the FAH family. Homodimer. The cofactor is Mg(2+). Mn(2+) serves as cofactor.

The catalysed reaction is (E)-caffeoylpyruvate + H2O = (E)-caffeate + pyruvate + H(+). Its pathway is secondary metabolite biosynthesis. In terms of biological role, caffeoylpyruvate hydrolase; part of the gene cluster that mediates the fungal bioluminescence cycle. Involved in the recycling of oxyluciferin, a pyruvic acid adduct of caffeic acid, to caffeic acid. The fungal bioluminescence cycle begins with the hispidin synthetase that catalyzes the formation of hispidin which is further hydroxylated by the hispidin-3-hydroxylase, yielding the fungal luciferin 3-hydroxyhispidin. The luciferase then produces an endoperoxide as a high-energy intermediate with decomposition that yields oxyluciferin (also known as caffeoylpyruvate) and light emission. Oxyluciferin can be recycled to caffeic acid by caffeoylpyruvate hydrolase. This chain is Caffeoylpyruvate hydrolase, found in Neonothopanus nambi (Agaricus nambi).